The following is a 332-amino-acid chain: DNA-directed RNA polymerase subunit alpha (332 aa).

Residues 1 to 231 (MVREKVTVST…DLFIPFLHME (231 aa)) form an alpha N-terminal domain (alpha-NTD) region. The segment at 262 to 332 (LSLESLFIDQ…FALDLPKNLN (71 aa)) is alpha C-terminal domain (alpha-CTD).

This sequence belongs to the RNA polymerase alpha chain family. In plastids the minimal PEP RNA polymerase catalytic core is composed of four subunits: alpha, beta, beta', and beta''. When a (nuclear-encoded) sigma factor is associated with the core the holoenzyme is formed, which can initiate transcription.

It localises to the plastid. It catalyses the reaction RNA(n) + a ribonucleoside 5'-triphosphate = RNA(n+1) + diphosphate. In terms of biological role, DNA-dependent RNA polymerase catalyzes the transcription of DNA into RNA using the four ribonucleoside triphosphates as substrates. This chain is DNA-directed RNA polymerase subunit alpha, found in Cuscuta japonica (Japanese dodder).